A 315-amino-acid polypeptide reads, in one-letter code: Type II methyltransferase M.Bsp6I (315 aa).

Positions 2–315 (LQIASLFAGV…IAENIYKSML (314 aa)) constitute an SAM-dependent MTase C5-type domain. The active site involves cysteine 73.

It belongs to the class I-like SAM-binding methyltransferase superfamily. C5-methyltransferase family.

It carries out the reaction a 2'-deoxycytidine in DNA + S-adenosyl-L-methionine = a 5-methyl-2'-deoxycytidine in DNA + S-adenosyl-L-homocysteine + H(+). Its function is as follows. A methylase that recognizes the double-stranded sequence 5'-GCNGC-3', methylates C-? on both strands, and protects the DNA from cleavage by the Bsp6I endonuclease. The chain is Type II methyltransferase M.Bsp6I from Bacillus sp. (strain RFL6).